The following is a 228-amino-acid chain: MLKDIFLFWGSLFGYDHTAIYIFHFLLVVAITMFIAVAVTKSMRLVPRGLQNIIEAYLSGVIALGKDAMGSEKLARKYMPLIATIGFIVFLSNIIGLIPGFEAPTASLNLTLSLTLCVFFYYHFEGIREKGFIKYFAGFCGPVKAIAPFMFVIEVISHLSRIISLSFRLFGNIKGDDLFLLVMLTLAPVLVPMIPYALLSFMAILQAFIFMVLSYVYLAGAVVVDEEH.

6 helical membrane-spanning segments follow: residues 19 to 39 (AIYI…AVAV), 81 to 101 (LIAT…IPGF), 107 to 127 (SLNL…FEGI), 136 to 156 (FAGF…IEVI), 178 to 198 (LFLL…PYAL), and 204 to 224 (ILQA…AVVV).

This sequence belongs to the ATPase A chain family. As to quaternary structure, F-type ATPases have 2 components, CF(1) - the catalytic core - and CF(0) - the membrane proton channel. CF(1) has five subunits: alpha(3), beta(3), gamma(1), delta(1), epsilon(1). CF(0) has three main subunits: a(1), b(2) and c(9-12). The alpha and beta chains form an alternating ring which encloses part of the gamma chain. CF(1) is attached to CF(0) by a central stalk formed by the gamma and epsilon chains, while a peripheral stalk is formed by the delta and b chains.

The protein resides in the cell inner membrane. Functionally, key component of the proton channel; it plays a direct role in the translocation of protons across the membrane. This is ATP synthase subunit a from Campylobacter hominis (strain ATCC BAA-381 / DSM 21671 / CCUG 45161 / LMG 19568 / NCTC 13146 / CH001A).